The sequence spans 190 residues: Threonylcarbamoyl-AMP synthase (190 aa).

Positions 7-190 constitute a YrdC-like domain; that stretch reads GDAIAAAIDV…ALTGELFRQG (184 aa).

It belongs to the SUA5 family. TsaC subfamily.

The protein resides in the cytoplasm. It carries out the reaction L-threonine + hydrogencarbonate + ATP = L-threonylcarbamoyladenylate + diphosphate + H2O. In terms of biological role, required for the formation of a threonylcarbamoyl group on adenosine at position 37 (t(6)A37) in tRNAs that read codons beginning with adenine. Catalyzes the conversion of L-threonine, HCO(3)(-)/CO(2) and ATP to give threonylcarbamoyl-AMP (TC-AMP) as the acyladenylate intermediate, with the release of diphosphate. In Shigella boydii serotype 4 (strain Sb227), this protein is Threonylcarbamoyl-AMP synthase.